We begin with the raw amino-acid sequence, 245 residues long: NAD(P)H-hydrate epimerase (245 aa).

One can recognise a YjeF N-terminal domain in the interval 21-221; the sequence is MREIDRLAVQ…DLGIPPAVYT (201 aa). Residue 72-76 participates in (6S)-NADPHX binding; it reads GNGGG. Residues Asn-73 and Asp-135 each contribute to the K(+) site. (6S)-NADPHX contacts are provided by residues 139–145 and Asp-168; that span reads GYSLLGA. Ser-171 is a K(+) binding site.

The protein belongs to the NnrE/AIBP family. K(+) serves as cofactor.

It carries out the reaction (6R)-NADHX = (6S)-NADHX. The enzyme catalyses (6R)-NADPHX = (6S)-NADPHX. In terms of biological role, catalyzes the epimerization of the S- and R-forms of NAD(P)HX, a damaged form of NAD(P)H that is a result of enzymatic or heat-dependent hydration. This is a prerequisite for the S-specific NAD(P)H-hydrate dehydratase to allow the repair of both epimers of NAD(P)HX. The sequence is that of NAD(P)H-hydrate epimerase from Dehalogenimonas lykanthroporepellens (strain ATCC BAA-1523 / JCM 15061 / BL-DC-9).